The following is a 347-amino-acid chain: 3-isopropylmalate dehydrogenase (347 aa).

Substrate contacts are provided by Arg94, Arg104, Arg128, and Asp219. Mg(2+) is bound by residues Asp219, Asp243, and Asp247. 279–291 is an NAD(+) binding site; it reads GSAPDIAGQGKAD.

This sequence belongs to the isocitrate and isopropylmalate dehydrogenases family. LeuB type 2 subfamily. Homodimer. Mg(2+) serves as cofactor. Mn(2+) is required as a cofactor.

It localises to the cytoplasm. It catalyses the reaction (2R,3S)-3-isopropylmalate + NAD(+) = 4-methyl-2-oxopentanoate + CO2 + NADH. Its pathway is amino-acid biosynthesis; L-leucine biosynthesis; L-leucine from 3-methyl-2-oxobutanoate: step 3/4. Catalyzes the oxidation of 3-carboxy-2-hydroxy-4-methylpentanoate (3-isopropylmalate) to 3-carboxy-4-methyl-2-oxopentanoate. The product decarboxylates to 4-methyl-2 oxopentanoate. This chain is 3-isopropylmalate dehydrogenase, found in Streptomyces griseus subsp. griseus (strain JCM 4626 / CBS 651.72 / NBRC 13350 / KCC S-0626 / ISP 5235).